The sequence spans 383 residues: ATP phosphoribosyltransferase regulatory subunit (383 aa).

The protein belongs to the class-II aminoacyl-tRNA synthetase family. HisZ subfamily. As to quaternary structure, heteromultimer composed of HisG and HisZ subunits.

It is found in the cytoplasm. It functions in the pathway amino-acid biosynthesis; L-histidine biosynthesis; L-histidine from 5-phospho-alpha-D-ribose 1-diphosphate: step 1/9. In terms of biological role, required for the first step of histidine biosynthesis. May allow the feedback regulation of ATP phosphoribosyltransferase activity by histidine. The chain is ATP phosphoribosyltransferase regulatory subunit from Janthinobacterium sp. (strain Marseille) (Minibacterium massiliensis).